The primary structure comprises 140 residues: Small ribosomal subunit protein uS12 (140 aa).

D102 is subject to 3-methylthioaspartic acid.

It belongs to the universal ribosomal protein uS12 family. In terms of assembly, part of the 30S ribosomal subunit. Contacts proteins S8 and S17. May interact with IF1 in the 30S initiation complex.

With S4 and S5 plays an important role in translational accuracy. Its function is as follows. Interacts with and stabilizes bases of the 16S rRNA that are involved in tRNA selection in the A site and with the mRNA backbone. Located at the interface of the 30S and 50S subunits, it traverses the body of the 30S subunit contacting proteins on the other side and probably holding the rRNA structure together. The combined cluster of proteins S8, S12 and S17 appears to hold together the shoulder and platform of the 30S subunit. The protein is Small ribosomal subunit protein uS12 of Bacillus anthracis (strain A0248).